The following is a 695-amino-acid chain: Segment polarity protein dishevelled homolog DVL-1 (695 aa).

In terms of domain architecture, DIX spans 1-85 (MAETKIIYHM…RVVSWLVLAE (85 aa)). The segment at 89-235 (SDAGSQGTDS…QRLRQTDRAS (147 aa)) is disordered. The segment covering 142-151 (SHRRERARRR) has biased composition (basic residues). Basic and acidic residues predominate over residues 152–171 (NRDEAARTNGHPRGDRRRDL). Positions 177 to 192 (SASTVLSSELESSSFI) are enriched in low complexity. Residue Ser-194 is modified to Phosphoserine. Positions 201–214 (SRLSSSTEQSTSSR) are enriched in low complexity. Basic residues predominate over residues 215–228 (LVRKHKCRRRKQRL). The PDZ domain occupies 251-323 (TVTLNMERHH…NDDAVRVLRE (73 aa)). Positions 425-499 (PDSGLEIRDR…SEQCYYVFGD (75 aa)) constitute a DEP domain. The span at 559-580 (SCGSGSAGSQQSEGSKSSGSTR) shows a compositional bias: low complexity. The disordered stretch occupies residues 559–641 (SCGSGSAGSQ…SQASAVAPGL (83 aa)). The span at 622–635 (SQLSRGSSPRSQAS) shows a compositional bias: polar residues.

It belongs to the DSH family. Interacts with CXXC4. Interacts (via PDZ domain) with TMEM88. Interacts with BRD7 and INVS. Interacts (via PDZ domain) with VANGL1 and VANGL2 (via C-terminus). Interacts (via PDZ domain) with NXN. Interacts with ARRB1; the interaction is enhanced by phosphorylation of DVL1. Interacts with CYLD. Interacts (via PDZ domain) with RYK. Self-associates (via DIX domain) and forms higher homooligomers. Interacts (via PDZ domain) with DACT1 and FZD7, where DACT1 and FZD7 compete for the same binding site. Interacts (via DEP domain) with MUSK; the interaction is direct and mediates the formation a DVL1, MUSK and PAK1 ternary complex involved in AChR clustering. Interacts with DCDC2. Interacts with FOXK2. Interacts with PKD1 (via extracellular domain). Interacts (via PDZ domain) with CCDC88C/DAPLE; competes with CCDC88C for binding to frizzled receptor FZD7 and dissociates from CCDC88C following initiation of non-canonical Wnt signaling when CCDC88C displaces DVL1 from ligand-activated FZD7. Post-translationally, ubiquitinated; undergoes both 'Lys-48'-linked ubiquitination, leading to its subsequent degradation by the ubiquitin-proteasome pathway, and 'Lys-63'-linked ubiquitination. The interaction with INVS is required for ubiquitination. Deubiquitinated by CYLD, which acts on 'Lys-63'-linked ubiquitin chains. As to expression, high levels are seen in the brain, testis and kidney, lower levels in the ovary, breast, muscle, liver and small intestine, and very low levels are seen in the spleen and thymus. A moderate level expression is seen in the heart.

It is found in the cell membrane. It localises to the cytoplasm. The protein localises to the cytosol. Its subcellular location is the cytoplasmic vesicle. Participates in Wnt signaling by binding to the cytoplasmic C-terminus of frizzled family members and transducing the Wnt signal to down-stream effectors. Plays a role both in canonical and non-canonical Wnt signaling. Plays a role in the signal transduction pathways mediated by multiple Wnt genes. Required for LEF1 activation upon WNT1 and WNT3A signaling. DVL1 and PAK1 form a ternary complex with MUSK which is important for MUSK-dependent regulation of AChR clustering during the formation of the neuromuscular junction (NMJ). In Mus musculus (Mouse), this protein is Segment polarity protein dishevelled homolog DVL-1 (Dvl1).